We begin with the raw amino-acid sequence, 500 residues long: Tektin-like protein 1 (500 aa).

The stretch at 198-229 (MLTWEKEELKSMKRKMEADMEKSEALLKTLAS) forms a coiled coil. The residue at position 372 (Tyr372) is a Phosphotyrosine. Residues 420–444 (DKLQRHISHVEKNLDELLSMRKKLT) are a coiled coil.

Microtubule inner protein component of sperm flagellar doublet microtubules.

It localises to the cytoplasm. The protein localises to the cytoskeleton. It is found in the flagellum axoneme. In terms of biological role, microtubule inner protein (MIP) part of the dynein-decorated doublet microtubules (DMTs) in sperm flagellar axoneme, which is required for motile flagellum beating. Forms an extensive interaction network cross-linking the lumen of axonemal doublet microtubules. The chain is Tektin-like protein 1 from Bos taurus (Bovine).